Here is a 371-residue protein sequence, read N- to C-terminus: Signal peptide peptidase-like 1 (371 aa).

The Lumenal portion of the chain corresponds to 1 to 6 (MESLWK). Residues 7 to 27 (LSYLLEPASLALILTAVSVAY) form a helical membrane-spanning segment. Over 28–57 (ASASRALDHGREMERNLDFSEASITLDRSQ) the chain is Cytoplasmic. A helical membrane pass occupies residues 58–75 (ALMIPLASSCSLLLMFYL). Topologically, residues 76–80 (FSSVS) are lumenal. Residues 81 to 103 (HLVTAFTAVASAMALFFCLSPYV) traverse the membrane as a helical segment. At 104 to 123 (NCVRSRLGVGDPFVSRCCSK) the chain is on the cytoplasmic side. The chain crosses the membrane as a helical span at residues 124 to 146 (PFTRLQGLLVAICVGTVVAWLVS). Residues 147-149 (GHW) lie on the Lumenal side of the membrane. Residues 150–167 (LLNNLLGISICIAFVSHV) form a helical membrane-spanning segment. Topologically, residues 168–171 (RLPN) are cytoplasmic. Residues 172–192 (IKICALLLVCLFVYDVFWVFF) form a helical membrane-spanning segment. The active site involves Asp186. The Lumenal segment spans residues 193-258 (SERFFGANVM…LAPGSSPGDY (66 aa)). A helical transmembrane segment spans residues 259–279 (MMLGLGDMAIPGMLLALVLSF). The active site involves Asp265. Over 280 to 301 (DHRKIKDMSVSQDMPPSKQRKY) the chain is Cytoplasmic. A helical membrane pass occupies residues 302 to 322 (VWYALTGYGVGLVTALAAGIL). Topologically, residues 323-326 (SQSP) are lumenal. Residues 327–347 (QPALLYLVPSTLGPVMYMSWL) traverse the membrane as a helical segment. The short motif at 328 to 330 (PAL) is the PAL element. Residues 348-371 (RNELWELWEGSRPIINDKAHLLEV) are Cytoplasmic-facing.

It belongs to the peptidase A22B family.

Its subcellular location is the endosome membrane. Functionally, intramembrane-cleaving aspartic protease (I-CLiP) that cleaves type II membrane signal peptides in the hydrophobic plane of the membrane. The sequence is that of Signal peptide peptidase-like 1 (SPPL1) from Oryza sativa subsp. japonica (Rice).